Consider the following 469-residue polypeptide: Reticulon-2 (469 aa).

Disordered stretches follow at residues 1-180 (MGQV…EASE) and 201-238 (LTPQLSPSSGIPQAHTPSPQRSQDLNTGPDEPLPNGEG). Positions 14–25 (APSTASSTPDST) are enriched in low complexity. Positions 32–43 (SDFRELHTAREF) are enriched in basic and acidic residues. S44 is subject to Phosphoserine. Positions 135 to 144 (RPLEELRLRL) are enriched in basic and acidic residues. Composition is skewed to polar residues over residues 159-168 (DSATSSSTPL) and 203-226 (PQLSPSSGIPQAHTPSPQRSQDLN). In terms of domain architecture, Reticulon spans 270–469 (VADLLYWKDT…SVSGSKAKAE (200 aa)). Transmembrane regions (helical) follow at residues 293–313 (LLCLLHFSIVSVAAHLALLGL) and 388–408 (LLFYILTFVGAIFNGLTLVIL).

As to quaternary structure, interacts with SPAST. Interacts with BACE1. Interacts (via first transmembrane domain) with ARL6IP5/GTRAP3-18. Interacts (via N-terminus) with SLC1A1/EAAC1; the interaction promotes cell surface expression of SLC1A1. In terms of tissue distribution, expressed in brain and spinal cord (at protein level). In the embryonic brain cortex, expressed in neurons but not in astrocytes (at protein level).

It is found in the endoplasmic reticulum membrane. Its subcellular location is the sarcoplasmic reticulum membrane. The protein localises to the cell membrane. The protein resides in the sarcolemma. It localises to the T-tubule. It is found in the cytoplasm. Its subcellular location is the myofibril. The protein localises to the sarcomere. The protein resides in the z line. It localises to the cytoskeleton. In terms of biological role, inhibits amyloid precursor protein processing, probably by blocking BACE1 activity. Enhances trafficking of the glutamate transporter SLC1A1/EAAC1 from the endoplasmic reticulum to the cell surface. Plays a role in the translocation of SLC2A4/GLUT4 from intracellular membranes to the cell membrane which facilitates the uptake of glucose into the cell. This chain is Reticulon-2, found in Rattus norvegicus (Rat).